The chain runs to 419 residues: Tyrosine--tRNA ligase (419 aa).

Tyr34 serves as a coordination point for L-tyrosine. The short motif at 39-48 is the 'HIGH' region element; the sequence is PTADSLHIGH. 3 residues coordinate L-tyrosine: Tyr169, Gln173, and Asp176. The 'KMSKS' region motif lies at 230–234; sequence KFGKT. Residue Lys233 coordinates ATP. The 68-residue stretch at 352 to 419 folds into the S4 RNA-binding domain; sequence VPLVELLVSA…KKKYYLIRYA (68 aa).

Belongs to the class-I aminoacyl-tRNA synthetase family. TyrS type 1 subfamily. Homodimer.

It localises to the cytoplasm. The catalysed reaction is tRNA(Tyr) + L-tyrosine + ATP = L-tyrosyl-tRNA(Tyr) + AMP + diphosphate + H(+). In terms of biological role, catalyzes the attachment of tyrosine to tRNA(Tyr) in a two-step reaction: tyrosine is first activated by ATP to form Tyr-AMP and then transferred to the acceptor end of tRNA(Tyr). This chain is Tyrosine--tRNA ligase (tyrS), found in Geobacillus stearothermophilus (Bacillus stearothermophilus).